A 207-amino-acid chain; its full sequence is Phenazine biosynthesis protein PhzD1 (207 aa).

The active-site Proton donor is aspartate 38. Substrate contacts are provided by residues glutamine 78, arginine 87, lysine 122, and 151 to 155; that span reads YAHVG.

It belongs to the isochorismatase family. As to quaternary structure, homodimer.

It catalyses the reaction (2S)-2-amino-4-deoxychorismate + H2O = (5S,6S)-6-amino-5-hydroxycyclohexa-1,3-diene-1-carboxyate + pyruvate. Its pathway is antibiotic biosynthesis; phenazine biosynthesis. In terms of biological role, involved in the biosynthesis of the antibiotic phenazine, a nitrogen-containing heterocyclic molecule. PhzD1 (operon phzA1B1C1E1F1G1) has a role in the biosynthesis of the phenazine during planktonic growth. Catalyzes the hydrolysis of the vinyl ether functional group of 2-amino-2-deoxyisochorismate (ADIC), yielding pyruvate and trans-2,3-dihydro-3-hydroxyanthranilic acid (DHHA). Also able to act on isochorismate, chorismate and 4-amino-4-deoxychorismate (ADC) as substrates. The sequence is that of Phenazine biosynthesis protein PhzD1 from Pseudomonas aeruginosa (strain ATCC 15692 / DSM 22644 / CIP 104116 / JCM 14847 / LMG 12228 / 1C / PRS 101 / PAO1).